A 356-amino-acid chain; its full sequence is Pyruvate dehydrogenase E1 component subunit beta, mitochondrial (356 aa).

Residues 1 to 25 (MLSSILKKIQPSLLVNFRIITRTYA) constitute a mitochondrion transit peptide. Glu85 contributes to the thiamine diphosphate binding site. K(+) contacts are provided by Ile138, Ala186, Ile187, Asp189, and Asn191.

Tetramer of 2 alpha and 2 beta subunits. Requires thiamine diphosphate as cofactor.

The protein localises to the mitochondrion matrix. It carries out the reaction N(6)-[(R)-lipoyl]-L-lysyl-[protein] + pyruvate + H(+) = N(6)-[(R)-S(8)-acetyldihydrolipoyl]-L-lysyl-[protein] + CO2. Its function is as follows. The pyruvate dehydrogenase complex catalyzes the overall conversion of pyruvate to acetyl-CoA and CO(2). It contains multiple copies of three enzymatic components: pyruvate dehydrogenase (E1), dihydrolipoamide acetyltransferase (E2) and lipoamide dehydrogenase (E3). This is Pyruvate dehydrogenase E1 component subunit beta, mitochondrial (pdhB) from Dictyostelium discoideum (Social amoeba).